A 199-amino-acid chain; its full sequence is NAD(P)H dehydrogenase (quinone) (199 aa).

Residues Val-4–Ile-190 form the Flavodoxin-like domain. Residues Ser-10–Ile-15 and Thr-78–Phe-80 contribute to the FMN site. Tyr-12 is a binding site for NAD(+). Trp-98 lines the substrate pocket. FMN-binding positions include Ser-113–Gly-119 and His-134.

The protein belongs to the WrbA family. Requires FMN as cofactor.

It catalyses the reaction a quinone + NADH + H(+) = a quinol + NAD(+). It carries out the reaction a quinone + NADPH + H(+) = a quinol + NADP(+). This chain is NAD(P)H dehydrogenase (quinone), found in Bradyrhizobium sp. (strain BTAi1 / ATCC BAA-1182).